The chain runs to 1138 residues: Exportin-6-B (1138 aa).

One can recognise an Importin N-terminal domain in the interval 31-97 (IESLLNNFAQ…RSSLPKLLLS (67 aa)). Low complexity predominate over residues 291–307 (SVTTNTTSSVVNGGSSS). The tract at residues 291 to 315 (SVTTNTTSSVVNGGSSSPPLHSAAP) is disordered.

Belongs to the exportin family.

The protein resides in the nucleus. The protein localises to the cytoplasm. Mediates the nuclear export of actin and profilin-actin complexes in somatic cells. Oocyte nuclei lack active actin export. Functionally, mediates the nuclear export of actin and profilin-actin complexes in somatic cells. The chain is Exportin-6-B (xpo6-b) from Xenopus laevis (African clawed frog).